The sequence spans 188 residues: Elongation factor P (188 aa).

At lysine 34 the chain carries N6-(3,6-diaminohexanoyl)-5-hydroxylysine.

This sequence belongs to the elongation factor P family. In terms of processing, may be beta-lysylated on the epsilon-amino group of Lys-34 by the combined action of EpmA and EpmB, and then hydroxylated on the C5 position of the same residue by EpmC (if this protein is present). Lysylation is critical for the stimulatory effect of EF-P on peptide-bond formation. The lysylation moiety may extend toward the peptidyltransferase center and stabilize the terminal 3-CCA end of the tRNA. Hydroxylation of the C5 position on Lys-34 may allow additional potential stabilizing hydrogen-bond interactions with the P-tRNA.

Its subcellular location is the cytoplasm. It participates in protein biosynthesis; polypeptide chain elongation. Functionally, involved in peptide bond synthesis. Alleviates ribosome stalling that occurs when 3 or more consecutive Pro residues or the sequence PPG is present in a protein, possibly by augmenting the peptidyl transferase activity of the ribosome. Modification of Lys-34 is required for alleviation. This Vibrio campbellii (strain ATCC BAA-1116) protein is Elongation factor P.